A 458-amino-acid chain; its full sequence is MVPAKKLKIAFVHPDLGIGGAERLVVDAALGLQEAGHEVIIYTSHCDKTHCFEEVKNGTLKVEVFGDFLPTDLGKRFFIVFANLRQLYLTAKVVLSGRSKDKDVFIIDQLSTCVPFFKLANNKVLFYCHFPDQLLAIRTNWIKSLYRIPFDLLEQFTMYCSDEVVVNSNFTKSMYKKTFKYLQKNPNVIYPCVDTDTETLINDRDMQIGNLLVGKCPNFYLSINRYERKKNIELAIQAFAKASVENTNLVVCGGYDPRIHENVQYLQELTCLCKELDLSYTVNHYSDFIEDSYSVNEIEKLFGAKVIFLTSISSSLKEFLIQNMQLLLYTPSYEHFGIVPLEAMKYGKPVLAVNNGGPVETVVSYQKEDNEKSTTGWLRSADADEWASALIESKEVLNQNPELFKNNGPKRVIELFSRKAMTQEFETNIKLALRHTSNISIIYVVSIIFAVLLKVFVF.

2 N-linked (GlcNAc...) asparagine glycosylation sites follow: Asn-57 and Asn-169. A helical membrane pass occupies residues 438 to 458; sequence NISIIYVVSIIFAVLLKVFVF.

It belongs to the glycosyltransferase group 1 family.

It is found in the endoplasmic reticulum membrane. It carries out the reaction a beta-D-Man-(1-&gt;4)-beta-D-GlcNAc-(1-&gt;4)-alpha-D-GlcNAc-diphospho-di-trans,poly-cis-dolichol + GDP-alpha-D-mannose = an alpha-D-Man-(1-&gt;3)-beta-D-Man-(1-&gt;4)-beta-D-GlcNAc-(1-&gt;4)-alpha-D-GlcNAc-diphospho-di-trans,poly-cis-dolichol + GDP + H(+). The enzyme catalyses an alpha-D-Man-(1-&gt;3)-beta-D-Man-(1-&gt;4)-beta-D-GlcNAc-(1-&gt;4)-alpha-D-GlcNAc-diphospho-di-trans,poly-cis-dolichol + GDP-alpha-D-mannose = an alpha-D-Man-(1-&gt;3)-[alpha-D-Man-(1-&gt;6)]-beta-D-Man-(1-&gt;4)-beta-D-GlcNAc-(1-&gt;4)-alpha-D-GlcNAc-diphospho-di-trans,poly-cis-dolichol + GDP + H(+). It participates in protein modification; protein glycosylation. Functionally, mannosylates Man(2)GlcNAc(2)-dolichol diphosphate and Man(1)GlcNAc(2)-dolichol diphosphate to form Man(3)GlcNAc(2)-dolichol diphosphate. The sequence is that of Alpha-1,3/1,6-mannosyltransferase ALG2 (ALG2) from Candida glabrata (strain ATCC 2001 / BCRC 20586 / JCM 3761 / NBRC 0622 / NRRL Y-65 / CBS 138) (Yeast).